The following is a 130-amino-acid chain: MKRRTARERAMQALYQMDITGELEPKVAVENTLDEGEETNEFLESLVVGFVDNKEEIDAAIRQNLKKWKLERISIVDRSILRVAVCEMKYMEEIPHNVTINEAIEIAKTFGDEESRRFINGVLSNIKDTL.

This sequence belongs to the NusB family.

Involved in transcription antitermination. Required for transcription of ribosomal RNA (rRNA) genes. Binds specifically to the boxA antiterminator sequence of the ribosomal RNA (rrn) operons. This Bacillus mycoides (strain KBAB4) (Bacillus weihenstephanensis) protein is Transcription antitermination protein NusB.